Reading from the N-terminus, the 181-residue chain is Cytochrome b6-f complex iron-sulfur subunit (181 aa).

The segment at 1-35 (MAQTGNFKSPARMSSLGQGAAPASSGAVTGGKPRE) is disordered. 2 helical membrane-spanning segments follow: residues 53–73 (VGGV…KYII) and 114–134 (GGAL…VNWV). A Rieske domain is found at 85-178 (LTVGKASEVP…ARIEGDSIII (94 aa)). 4 residues coordinate [2Fe-2S] cluster: cysteine 124, histidine 126, cysteine 142, and histidine 145. Cysteine 129 and cysteine 144 are oxidised to a cystine.

It belongs to the Rieske iron-sulfur protein family. It depends on [2Fe-2S] cluster as a cofactor.

It is found in the cell inner membrane. It catalyses the reaction 2 oxidized [plastocyanin] + a plastoquinol + 2 H(+)(in) = 2 reduced [plastocyanin] + a plastoquinone + 4 H(+)(out). Component of the green S-bacteria bc-complex which consists of the Rieske protein and cytochrome b subunit and which appears to lack a cytochrome c1-equivalent. This complex has a comparatively low redox potential. In Chlorobaculum thiosulfatiphilum (Chlorobium limicola f.sp. thiosulfatophilum), this protein is Cytochrome b6-f complex iron-sulfur subunit (petC).